The following is a 228-amino-acid chain: Calcyclin-binding protein (228 aa).

An N-acetylalanine modification is found at Ala2. The segment at 2 to 80 (ASEELQKDLE…YTVKISNYGW (79 aa)) is interaction with SIAH1. Ser3 carries the post-translational modification Phosphoserine. Residues Lys8 and Lys19 each carry the N6-acetyllysine modification. Ser34 is modified (phosphoserine). The region spanning 73–167 (VKISNYGWDQ…VENTRWDYLT (95 aa)) is the CS domain. Residues 73 to 228 (VKISNYGWDQ…EKQAKGDTEF (156 aa)) are interaction with SKP1. 2 positions are modified to N6-acetyllysine: Lys85 and Lys118. Positions 154-228 (CRKKVENTRW…EKQAKGDTEF (75 aa)) are interaction with S100A6. Positions 168–228 (QVEKECKEKE…EKQAKGDTEF (61 aa)) constitute an SGS domain.

Component of some large E3 complex at least composed of UBE2D1, SIAH1, CACYBP/SIP, SKP1, APC and TBL1X. Interacts directly with SIAH1, SIAH2 and SKP1. Interacts with protein of the S100 family S100A1, S100A6, S100B, S100P and S100A12 in a calcium-dependent manner. In terms of processing, phosphorylated on serine residues. Phosphorylated upon induction by RA or at high calcium concentrations.

It is found in the nucleus. The protein resides in the cytoplasm. Its function is as follows. May be involved in calcium-dependent ubiquitination and subsequent proteasomal degradation of target proteins. Probably serves as a molecular bridge in ubiquitin E3 complexes. Participates in the ubiquitin-mediated degradation of beta-catenin (CTNNB1). In Macaca fascicularis (Crab-eating macaque), this protein is Calcyclin-binding protein (CACYBP).